Here is a 1606-residue protein sequence, read N- to C-terminus: E3 ubiquitin-protein ligase HECW1 (1606 aa).

In terms of domain architecture, C2 spans 182–318; sequence SAAPIFKSIG…LERHAIGDRV (137 aa). Disordered stretches follow at residues 349-418, 459-538, 566-672, and 730-815; these read DDEE…PAEE, AEQL…CSLP, LLHS…SCEG, and STVF…SQLP. A compositionally biased stretch (polar residues) spans 354–373; the sequence is SLSTEPESAQIQDSPMNNLM. The span at 380-392 shows a compositional bias: basic and acidic residues; it reads PRSEAPESSESWK. 2 stretches are compositionally biased toward acidic residues: residues 500 to 511 and 579 to 588; these read EEEEKEQEEEGD and AEEEDGAEEE. A compositionally biased stretch (basic and acidic residues) spans 589–600; sequence STLKDSSEKDGL. Positions 612–621 are enriched in acidic residues; it reads ALEEDREEPE. Polar residues-rich tracts occupy residues 651-663, 751-765, and 806-815; these read HPSTGSESDSSPR, DSMQSPELDPESTNG, and HNSQPVSQLP. One can recognise a WW 1 domain in the interval 829 to 862; sequence EPLPPNWEARIDSHGRVFYVDHVNRTTTWQRPTA. Residues 870–901 are a coiled coil; that stretch reads RRSGSIQQMEQLNRRYQNIQRTIATERSEEDS. Phosphoserine is present on residues Ser-874, Ser-937, and Ser-939. The tract at residues 894 to 938 is disordered; it reads TERSEEDSGSQSCEQAPAGGGGGGGSDSEAESSQSSLDLRREGSL. One can recognise a WW 2 domain in the interval 1018 to 1051; sequence LELPRGWEIKTDQQGKSFFVDHNSRATTFIDPRI. The 336-residue stretch at 1271-1606 folds into the HECT domain; that stretch reads SRKELQRNKL…VEETSTFGLE (336 aa). Cys-1574 (glycyl thioester intermediate) is an active-site residue.

In terms of assembly, interacts with DVL1 and SSR3. Also interacts with mutant SOD1. In terms of tissue distribution, predominantly expressed in neurons of adult and fetal brain. Weakly expressed in the kidney.

It localises to the cytoplasm. It carries out the reaction S-ubiquitinyl-[E2 ubiquitin-conjugating enzyme]-L-cysteine + [acceptor protein]-L-lysine = [E2 ubiquitin-conjugating enzyme]-L-cysteine + N(6)-ubiquitinyl-[acceptor protein]-L-lysine.. It participates in protein modification; protein ubiquitination. Its function is as follows. E3 ubiquitin-protein ligase that mediates ubiquitination and subsequent degradation of DVL1. Also targets the mutant SOD1 protein involved in familial amyotrophic lateral sclerosis (FALS). Forms cytotoxic aggregates with DVL1, SSR3 and mutant SOD1 that lead to motor neuron death in FALS. The sequence is that of E3 ubiquitin-protein ligase HECW1 (HECW1) from Homo sapiens (Human).